The following is an 848-amino-acid chain: Leucine--tRNA ligase (848 aa).

Residues 41–51 (PYPSGRIHMGH) carry the 'HIGH' region motif. A 'KMSKS' region motif is present at residues 619–623 (KMSKS). Residue Lys-622 coordinates ATP.

It belongs to the class-I aminoacyl-tRNA synthetase family.

The protein localises to the cytoplasm. The enzyme catalyses tRNA(Leu) + L-leucine + ATP = L-leucyl-tRNA(Leu) + AMP + diphosphate. In Roseobacter denitrificans (strain ATCC 33942 / OCh 114) (Erythrobacter sp. (strain OCh 114)), this protein is Leucine--tRNA ligase.